A 136-amino-acid polypeptide reads, in one-letter code: Large ribosomal subunit protein uL13 (136 aa).

The protein belongs to the universal ribosomal protein uL13 family. In terms of assembly, part of the 50S ribosomal subunit.

Functionally, this protein is one of the early assembly proteins of the 50S ribosomal subunit, although it is not seen to bind rRNA by itself. It is important during the early stages of 50S assembly. In Thermoplasma volcanium (strain ATCC 51530 / DSM 4299 / JCM 9571 / NBRC 15438 / GSS1), this protein is Large ribosomal subunit protein uL13.